A 195-amino-acid chain; its full sequence is Adenylate kinase (195 aa).

8–16 (GIPGVGKTT) contacts ATP.

Belongs to the archaeal adenylate kinase family.

The protein resides in the cytoplasm. The catalysed reaction is AMP + ATP = 2 ADP. This chain is Adenylate kinase, found in Saccharolobus islandicus (strain M.14.25 / Kamchatka #1) (Sulfolobus islandicus).